The primary structure comprises 155 residues: Endoribonuclease YbeY (155 aa).

The Zn(2+) site is built by histidine 114, histidine 118, and histidine 124.

The protein belongs to the endoribonuclease YbeY family. Requires Zn(2+) as cofactor.

The protein localises to the cytoplasm. Single strand-specific metallo-endoribonuclease involved in late-stage 70S ribosome quality control and in maturation of the 3' terminus of the 16S rRNA. The protein is Endoribonuclease YbeY of Escherichia coli O81 (strain ED1a).